The sequence spans 145 residues: Large ribosomal subunit protein bL19 (145 aa).

Belongs to the bacterial ribosomal protein bL19 family.

Its function is as follows. This protein is located at the 30S-50S ribosomal subunit interface and may play a role in the structure and function of the aminoacyl-tRNA binding site. The polypeptide is Large ribosomal subunit protein bL19 (Brucella abortus (strain S19)).